The sequence spans 365 residues: Chorismate synthase (365 aa).

2 residues coordinate NADP(+): R48 and R54. FMN-binding positions include 131 to 133, 243 to 244, G288, 303 to 307, and R329; these read RSS, NA, and KPTSS.

This sequence belongs to the chorismate synthase family. In terms of assembly, homotetramer. FMNH2 serves as cofactor.

It carries out the reaction 5-O-(1-carboxyvinyl)-3-phosphoshikimate = chorismate + phosphate. The protein operates within metabolic intermediate biosynthesis; chorismate biosynthesis; chorismate from D-erythrose 4-phosphate and phosphoenolpyruvate: step 7/7. Its function is as follows. Catalyzes the anti-1,4-elimination of the C-3 phosphate and the C-6 proR hydrogen from 5-enolpyruvylshikimate-3-phosphate (EPSP) to yield chorismate, which is the branch point compound that serves as the starting substrate for the three terminal pathways of aromatic amino acid biosynthesis. This reaction introduces a second double bond into the aromatic ring system. This chain is Chorismate synthase, found in Rhizobium leguminosarum bv. trifolii (strain WSM2304).